We begin with the raw amino-acid sequence, 1384 residues long: RRP12-like protein (1384 aa).

The span at 1–13 (MGKFRSKLKRNGK) shows a compositional bias: basic residues. A disordered region spans residues 1 to 32 (MGKFRSKLKRNGKGKTWSRGESATSNPTQMKH). Polar residues predominate over residues 19-29 (RGESATSNPTQ). 7 positions are modified to phosphoserine: Ser-82, Ser-85, Ser-96, Ser-1094, Ser-1095, Ser-1117, and Ser-1119. 3 disordered regions span residues 1082 to 1102 (LRKKQNLEAQEDSSDDELVSG), 1114 to 1155 (LADS…IRED), and 1176 to 1384 (SAQT…KKYK). 2 stretches are compositionally biased toward acidic residues: residues 1090 to 1099 (AQEDSSDDEL) and 1114 to 1127 (LADSDSDLPEDMDA). The segment covering 1176 to 1191 (SAQTATPAQSQKTKAQ) has biased composition (polar residues). Ser-1221, Ser-1225, Ser-1227, Ser-1230, Ser-1250, and Ser-1251 each carry phosphoserine. Polar residues-rich tracts occupy residues 1276 to 1285 (SGKTTASSRY) and 1297 to 1315 (TAGNSDAMSVKSGKSTSRP). Residues 1321–1334 (GSKKAKGDMKKSGK) are compositionally biased toward basic and acidic residues. Residues 1348–1362 (LNKRKRSMNSRKFKS) are compositionally biased toward basic residues. Gly residues predominate over residues 1369 to 1378 (AENGGAGGGR).

The protein belongs to the RRP12 family.

It is found in the nucleus. The chain is RRP12-like protein from Drosophila melanogaster (Fruit fly).